Reading from the N-terminus, the 223-residue chain is Cytidylate kinase (223 aa).

10–18 (GPASSGKST) is a binding site for ATP.

Belongs to the cytidylate kinase family. Type 1 subfamily.

It localises to the cytoplasm. The enzyme catalyses CMP + ATP = CDP + ADP. The catalysed reaction is dCMP + ATP = dCDP + ADP. The sequence is that of Cytidylate kinase from Streptococcus pneumoniae (strain 70585).